A 485-amino-acid polypeptide reads, in one-letter code: Rhamnulokinase (485 aa).

Residue 8–12 participates in ATP binding; that stretch reads ASSGR. Substrate-binding positions include Gly78 and 231–233; that span reads HDT. The active-site Proton acceptor is the Asp232. Residue Thr254 participates in ATP binding. A substrate-binding site is contributed by Asn291. Gln299 contributes to the ATP binding site. Cys348 and Cys365 form a disulfide bridge. Residue Gly397 coordinates ATP. Cys408 and Cys412 are oxidised to a cystine.

The protein belongs to the rhamnulokinase family. It depends on Mg(2+) as a cofactor.

It catalyses the reaction L-rhamnulose + ATP = L-rhamnulose 1-phosphate + ADP + H(+). Its pathway is carbohydrate degradation; L-rhamnose degradation; glycerone phosphate from L-rhamnose: step 2/3. Involved in the catabolism of L-rhamnose (6-deoxy-L-mannose). Catalyzes the transfer of the gamma-phosphate group from ATP to the 1-hydroxyl group of L-rhamnulose to yield L-rhamnulose 1-phosphate. The sequence is that of Rhamnulokinase from Yersinia pestis bv. Antiqua (strain Angola).